Consider the following 577-residue polypeptide: Arginine--tRNA ligase (577 aa).

The 'HIGH' region motif lies at 122–132 (PNVAKEMHVGH).

The protein belongs to the class-I aminoacyl-tRNA synthetase family. In terms of assembly, monomer.

The protein localises to the cytoplasm. It carries out the reaction tRNA(Arg) + L-arginine + ATP = L-arginyl-tRNA(Arg) + AMP + diphosphate. This Histophilus somni (strain 129Pt) (Haemophilus somnus) protein is Arginine--tRNA ligase.